We begin with the raw amino-acid sequence, 469 residues long: L-seryl-tRNA(Sec) selenium transferase (469 aa).

The residue at position 295 (K295) is an N6-(pyridoxal phosphate)lysine.

Belongs to the SelA family. It depends on pyridoxal 5'-phosphate as a cofactor.

It is found in the cytoplasm. The catalysed reaction is L-seryl-tRNA(Sec) + selenophosphate + H(+) = L-selenocysteinyl-tRNA(Sec) + phosphate. It functions in the pathway aminoacyl-tRNA biosynthesis; selenocysteinyl-tRNA(Sec) biosynthesis; selenocysteinyl-tRNA(Sec) from L-seryl-tRNA(Sec) (bacterial route): step 1/1. In terms of biological role, converts seryl-tRNA(Sec) to selenocysteinyl-tRNA(Sec) required for selenoprotein biosynthesis. In Methylocella silvestris (strain DSM 15510 / CIP 108128 / LMG 27833 / NCIMB 13906 / BL2), this protein is L-seryl-tRNA(Sec) selenium transferase.